A 325-amino-acid chain; its full sequence is Beta-ketoacyl-[acyl-carrier-protein] synthase III (325 aa).

Active-site residues include C119 and H252. The ACP-binding stretch occupies residues 253-257; it reads QANIR. The active site involves N282.

This sequence belongs to the thiolase-like superfamily. FabH family. Homodimer.

It localises to the cytoplasm. The catalysed reaction is malonyl-[ACP] + acetyl-CoA + H(+) = 3-oxobutanoyl-[ACP] + CO2 + CoA. The protein operates within lipid metabolism; fatty acid biosynthesis. Catalyzes the condensation reaction of fatty acid synthesis by the addition to an acyl acceptor of two carbons from malonyl-ACP. Catalyzes the first condensation reaction which initiates fatty acid synthesis and may therefore play a role in governing the total rate of fatty acid production. Possesses both acetoacetyl-ACP synthase and acetyl transacylase activities. Its substrate specificity determines the biosynthesis of branched-chain and/or straight-chain of fatty acids. The polypeptide is Beta-ketoacyl-[acyl-carrier-protein] synthase III (Acidovorax ebreus (strain TPSY) (Diaphorobacter sp. (strain TPSY))).